Reading from the N-terminus, the 364-residue chain is Anhydro-N-acetylmuramic acid kinase (364 aa).

Position 11 to 18 (11 to 18) interacts with ATP; it reads GSSLDGID.

The protein belongs to the anhydro-N-acetylmuramic acid kinase family.

The catalysed reaction is 1,6-anhydro-N-acetyl-beta-muramate + ATP + H2O = N-acetyl-D-muramate 6-phosphate + ADP + H(+). It participates in amino-sugar metabolism; 1,6-anhydro-N-acetylmuramate degradation. Its pathway is cell wall biogenesis; peptidoglycan recycling. Functionally, catalyzes the specific phosphorylation of 1,6-anhydro-N-acetylmuramic acid (anhMurNAc) with the simultaneous cleavage of the 1,6-anhydro ring, generating MurNAc-6-P. Is required for the utilization of anhMurNAc either imported from the medium or derived from its own cell wall murein, and thus plays a role in cell wall recycling. The protein is Anhydro-N-acetylmuramic acid kinase of Pseudomonas syringae pv. syringae (strain B728a).